We begin with the raw amino-acid sequence, 249 residues long: DNA repair protein RecO (249 aa).

The protein belongs to the RecO family.

Its function is as follows. Involved in DNA repair and RecF pathway recombination. In Sinorhizobium medicae (strain WSM419) (Ensifer medicae), this protein is DNA repair protein RecO.